A 174-amino-acid polypeptide reads, in one-letter code: UPF0664 stress-induced protein C29B12.11c (174 aa).

A disordered region spans residues 147–174; the sequence is HLDPLPPYHRPSSSQDQPPHYEEAVNKS. A compositionally biased stretch (basic and acidic residues) spans 165–174; that stretch reads PHYEEAVNKS.

It belongs to the UPF0664 family.

The protein localises to the cytoplasm. The protein resides in the nucleus. In Schizosaccharomyces pombe (strain 972 / ATCC 24843) (Fission yeast), this protein is UPF0664 stress-induced protein C29B12.11c.